The sequence spans 612 residues: Dihydroxy-acid dehydratase (612 aa).

Residue D81 participates in Mg(2+) binding. A [2Fe-2S] cluster-binding site is contributed by C122. The Mg(2+) site is built by D123 and K124. K124 carries the post-translational modification N6-carboxylysine. C195 is a binding site for [2Fe-2S] cluster. E491 is a binding site for Mg(2+). S517 functions as the Proton acceptor in the catalytic mechanism.

It belongs to the IlvD/Edd family. Homodimer. It depends on [2Fe-2S] cluster as a cofactor. Mg(2+) serves as cofactor.

The enzyme catalyses (2R)-2,3-dihydroxy-3-methylbutanoate = 3-methyl-2-oxobutanoate + H2O. It carries out the reaction (2R,3R)-2,3-dihydroxy-3-methylpentanoate = (S)-3-methyl-2-oxopentanoate + H2O. The protein operates within amino-acid biosynthesis; L-isoleucine biosynthesis; L-isoleucine from 2-oxobutanoate: step 3/4. It participates in amino-acid biosynthesis; L-valine biosynthesis; L-valine from pyruvate: step 3/4. Its function is as follows. Functions in the biosynthesis of branched-chain amino acids. Catalyzes the dehydration of (2R,3R)-2,3-dihydroxy-3-methylpentanoate (2,3-dihydroxy-3-methylvalerate) into 2-oxo-3-methylpentanoate (2-oxo-3-methylvalerate) and of (2R)-2,3-dihydroxy-3-methylbutanoate (2,3-dihydroxyisovalerate) into 2-oxo-3-methylbutanoate (2-oxoisovalerate), the penultimate precursor to L-isoleucine and L-valine, respectively. The chain is Dihydroxy-acid dehydratase from Buchnera aphidicola subsp. Baizongia pistaciae (strain Bp).